A 237-amino-acid polypeptide reads, in one-letter code: Ig heavy chain Mem5 (237 aa).

Ig-like domains lie at 1–119 (EVKL…LTVS) and 126–218 (PSVY…KKIE). The cysteines at positions 22 and 98 are disulfide-linked. Residues 101-105 (VDYGT) form a d segment region. A JH2 segment region spans residues 106–120 (NYDYWGQGTTLTVSS). Residues Cys147 and Cys202 are joined by a disulfide bond.

The protein resides in the secreted. Anti-influenza H3N2 neuraminidase antibody. The sequence is that of Ig heavy chain Mem5 from Mus musculus (Mouse).